Consider the following 1372-residue polypeptide: DNA-directed RNA polymerase subunit beta' (1372 aa).

4 residues coordinate Zn(2+): Cys69, Cys71, Cys84, and Cys87. The Mg(2+) site is built by Asp460, Asp462, and Asp464. Residues Cys808, Cys882, Cys889, and Cys892 each coordinate Zn(2+).

The protein belongs to the RNA polymerase beta' chain family. As to quaternary structure, the RNAP catalytic core consists of 2 alpha, 1 beta, 1 beta' and 1 omega subunit. When a sigma factor is associated with the core the holoenzyme is formed, which can initiate transcription. Requires Mg(2+) as cofactor. Zn(2+) is required as a cofactor.

It catalyses the reaction RNA(n) + a ribonucleoside 5'-triphosphate = RNA(n+1) + diphosphate. In terms of biological role, DNA-dependent RNA polymerase catalyzes the transcription of DNA into RNA using the four ribonucleoside triphosphates as substrates. The polypeptide is DNA-directed RNA polymerase subunit beta' (Rickettsia felis (strain ATCC VR-1525 / URRWXCal2) (Rickettsia azadi)).